The sequence spans 402 residues: Arabinosyltransferase RRA1 (402 aa).

Topologically, residues 1–13 (MAVRKEKVQPFRE) are cytoplasmic. The chain crosses the membrane as a helical; Signal-anchor for type II membrane protein span at residues 14–34 (CGIAIAVLVGIFIGCVCTILI). Topologically, residues 35-402 (PNDFVNFRSS…DALDRFRDGS (368 aa)) are lumenal. The short motif at 225–227 (DVD) is the DXD motif element. Asn-253 carries an N-linked (GlcNAc...) asparagine glycan.

This sequence belongs to the glycosyltransferase 77 family. In terms of tissue distribution, expressed in leaf meristem and at points of cauline leaf attachments on the primary stem. Expressed at low levels in siliques.

The protein localises to the golgi apparatus membrane. Functionally, plays a role in the arabinosylation of cell wall components. Involved in the arabinosylation of extensin proteins in root hair cells. Extensins are structural glycoproteins present in cell walls and its arabinosylation is important for root hair cell development. The chain is Arabinosyltransferase RRA1 from Arabidopsis thaliana (Mouse-ear cress).